Consider the following 118-residue polypeptide: uncharacterized protein (118 aa).

The protein localises to the mitochondrion. This is an uncharacterized protein from Arabidopsis thaliana (Mouse-ear cress).